A 318-amino-acid polypeptide reads, in one-letter code: Ribosomal RNA small subunit methyltransferase H (318 aa).

Residues 38–40 (GGH), Asp-58, Tyr-86, Asp-107, and Gln-114 each bind S-adenosyl-L-methionine.

The protein belongs to the methyltransferase superfamily. RsmH family.

Its subcellular location is the cytoplasm. It carries out the reaction cytidine(1402) in 16S rRNA + S-adenosyl-L-methionine = N(4)-methylcytidine(1402) in 16S rRNA + S-adenosyl-L-homocysteine + H(+). In terms of biological role, specifically methylates the N4 position of cytidine in position 1402 (C1402) of 16S rRNA. This Methylibium petroleiphilum (strain ATCC BAA-1232 / LMG 22953 / PM1) protein is Ribosomal RNA small subunit methyltransferase H.